The chain runs to 382 residues: tRNA-specific 2-thiouridylase MnmA (382 aa).

Residues 18–25 and Leu44 each bind ATP; that span reads AMSGGVDS. The active-site Nucleophile is Cys112. Cys112 and Cys209 are oxidised to a cystine. Residue Gly136 participates in ATP binding. Residues 159-161 form an interaction with tRNA region; sequence RDQ. Cys209 (cysteine persulfide intermediate) is an active-site residue.

It belongs to the MnmA/TRMU family.

Its subcellular location is the cytoplasm. It catalyses the reaction S-sulfanyl-L-cysteinyl-[protein] + uridine(34) in tRNA + AH2 + ATP = 2-thiouridine(34) in tRNA + L-cysteinyl-[protein] + A + AMP + diphosphate + H(+). Its function is as follows. Catalyzes the 2-thiolation of uridine at the wobble position (U34) of tRNA, leading to the formation of s(2)U34. This Methylobacterium sp. (strain 4-46) protein is tRNA-specific 2-thiouridylase MnmA.